We begin with the raw amino-acid sequence, 807 residues long: Phenylalanine--tRNA ligase beta subunit (807 aa).

The region spanning 39–153 is the tRNA-binding domain; it reads SARSQGVVVG…EIPAVGTPVA (115 aa). Residues 407 to 491 form the B5 domain; the sequence is RTPVPLQLRR…RLVGFDKFGS (85 aa). Aspartate 469, aspartate 475, glutamate 478, and glutamate 479 together coordinate Mg(2+). Positions 713–806 constitute an FDX-ACB domain; the sequence is PTVPASERDL…LSKQFKAELR (94 aa).

It belongs to the phenylalanyl-tRNA synthetase beta subunit family. Type 1 subfamily. Tetramer of two alpha and two beta subunits. Requires Mg(2+) as cofactor.

The protein resides in the cytoplasm. The enzyme catalyses tRNA(Phe) + L-phenylalanine + ATP = L-phenylalanyl-tRNA(Phe) + AMP + diphosphate + H(+). The sequence is that of Phenylalanine--tRNA ligase beta subunit from Synechococcus sp. (strain CC9902).